A 314-amino-acid polypeptide reads, in one-letter code: Olfactory receptor 11H7 (314 aa).

The Extracellular segment spans residues 1 to 24 (MNNSQISTVTQFVLLGFPGPWKIQ). N-linked (GlcNAc...) asparagine glycosylation is present at Asn-2. Residues 25–45 (IIFFSMILLVYIFTLTGNMAI) form a helical membrane-spanning segment. Residues 46 to 57 (ICAVRWDHRLHT) are Cytoplasmic-facing. Residues 58 to 78 (PMYVLLANFSFLEIWYVTCTV) form a helical membrane-spanning segment. Over 79–97 (PNMLVNFFSKTKTISFSGC) the chain is Extracellular. A disulfide bridge connects residues Cys-97 and Cys-179. The chain crosses the membrane as a helical span at residues 98–118 (FTQFHFFFSLGTTECFFLCVM). The Cytoplasmic segment spans residues 119 to 142 (AYDRYLAICHPLHYPSIMTGQLCG). Residues 143-163 (ILVSLCWLIGFLGHSISIFFI) form a helical membrane-spanning segment. At 164 to 201 (FQLPFCGPNIIDHFLCDVDPLMALSSAPTHIIGHVFHS) the chain is on the extracellular side. A helical membrane pass occupies residues 202-222 (VSSLFINLTMVYILGSYTLVL). The Cytoplasmic portion of the chain corresponds to 223–244 (RTVLQVPSSAGWQKAISTCGSH). Residues 245 to 265 (LVVVSLFYGAIMLMYVSPTPG) traverse the membrane as a helical segment. The Extracellular segment spans residues 266–271 (NSVAMH). A helical membrane pass occupies residues 272-292 (KLITLIYSVVTPVLNPLIYSL). The Cytoplasmic segment spans residues 293-314 (RNKDMKYALHHVFCGMRIIQRS).

It belongs to the G-protein coupled receptor 1 family.

The protein localises to the cell membrane. In terms of biological role, odorant receptor. Activated by isovaleric acid. This is Olfactory receptor 11H7 (OR11H7) from Homo sapiens (Human).